Reading from the N-terminus, the 218-residue chain is Cytidylate kinase (218 aa).

11 to 19 (GPGASGKGT) is an ATP binding site.

It belongs to the cytidylate kinase family. Type 1 subfamily.

The protein resides in the cytoplasm. It carries out the reaction CMP + ATP = CDP + ADP. The catalysed reaction is dCMP + ATP = dCDP + ADP. This is Cytidylate kinase from Neisseria gonorrhoeae (strain ATCC 700825 / FA 1090).